Reading from the N-terminus, the 529-residue chain is Peptide chain release factor 3 (529 aa).

The tr-type G domain maps to 11–280 (AKRRTFAIIS…GLVEWAPAPM (270 aa)). GTP contacts are provided by residues 20 to 27 (SHPDAGKT), 88 to 92 (DTPGH), and 142 to 145 (NKLD).

The protein belongs to the TRAFAC class translation factor GTPase superfamily. Classic translation factor GTPase family. PrfC subfamily.

The protein localises to the cytoplasm. In terms of biological role, increases the formation of ribosomal termination complexes and stimulates activities of RF-1 and RF-2. It binds guanine nucleotides and has strong preference for UGA stop codons. It may interact directly with the ribosome. The stimulation of RF-1 and RF-2 is significantly reduced by GTP and GDP, but not by GMP. In Shigella dysenteriae serotype 1 (strain Sd197), this protein is Peptide chain release factor 3.